The sequence spans 337 residues: MALQALHSSGVGLRRILAHFPEDLSLAFAYGSAVYRQAGPSAHQENPMLDLVFTVDDPVAWHAMNLKKNWSHYSFLKLLGPRIISSIQNNYGAGVYFNPLIRCDGKLIKYGVISTGTLIEDLLNWNNLYIAGRLQKPVKIVSMNENMALRAALDKNLRSAVTTACLMLPESFSEEDLFIEIAGLSYSGDFRMVIGEEKSKVLNIVKPNVGHFRELYESILQKDPQVVYKMHQGQLEIDKSPEGQFTQLMTLPRTLQQQINHIMDPPGRNRDVEETLLQVAQDPDCGDVVRLAISSIVRPSSIRQSTKGLFTAGMKKSVIYSSRKLNKMWKGWMSKAS.

Belongs to the TAM41 family. Mg(2+) serves as cofactor.

Its subcellular location is the mitochondrion inner membrane. The catalysed reaction is a 1,2-diacyl-sn-glycero-3-phosphate + CTP + H(+) = a CDP-1,2-diacyl-sn-glycerol + diphosphate. The protein operates within phospholipid metabolism; CDP-diacylglycerol biosynthesis; CDP-diacylglycerol from sn-glycerol 3-phosphate: step 3/3. In terms of biological role, catalyzes the conversion of phosphatidic acid (PA) to CDP-diacylglycerol (CDP-DAG), an essential intermediate in the synthesis of phosphatidylglycerol, cardiolipin and phosphatidylinositol. This Mus musculus (Mouse) protein is Phosphatidate cytidylyltransferase, mitochondrial (Tamm41).